The chain runs to 733 residues: Catalase-peroxidase 2 (733 aa).

Positions 1–35 (MAEAETHPPIGESQTEPAESGCPMRIKPPVEGGSN) are disordered. The tryptophyl-tyrosyl-methioninium (Trp-Tyr) (with M-260) cross-link spans 106 to 234 (WHAAGTYRVE…PXXPHMGLIY (129 aa)). The active-site Proton acceptor is H107. The tryptophyl-tyrosyl-methioninium (Tyr-Met) (with W-106) cross-link spans 234 to 260 (YVNPEGPEGNPDYLAAAIDIRETFGRM). H275 contacts heme.

It belongs to the peroxidase family. Peroxidase/catalase subfamily. In terms of assembly, homodimer or homotetramer. It depends on heme b as a cofactor. Formation of the three residue Trp-Tyr-Met cross-link is important for the catalase, but not the peroxidase activity of the enzyme.

It carries out the reaction H2O2 + AH2 = A + 2 H2O. The catalysed reaction is 2 H2O2 = O2 + 2 H2O. Bifunctional enzyme with both catalase and broad-spectrum peroxidase activity. May play a role in the intracellular survival of mycobacteria. This Mycolicibacterium fortuitum (Mycobacterium fortuitum) protein is Catalase-peroxidase 2.